The sequence spans 218 residues: Probable nicotinate-nucleotide adenylyltransferase (218 aa).

The protein belongs to the NadD family.

The catalysed reaction is nicotinate beta-D-ribonucleotide + ATP + H(+) = deamido-NAD(+) + diphosphate. It functions in the pathway cofactor biosynthesis; NAD(+) biosynthesis; deamido-NAD(+) from nicotinate D-ribonucleotide: step 1/1. Functionally, catalyzes the reversible adenylation of nicotinate mononucleotide (NaMN) to nicotinic acid adenine dinucleotide (NaAD). The protein is Probable nicotinate-nucleotide adenylyltransferase of Sodalis glossinidius (strain morsitans).